We begin with the raw amino-acid sequence, 392 residues long: Queuine tRNA-ribosyltransferase (392 aa).

The active-site Proton acceptor is Asp93. Residues 93–97, Asp147, Gln189, and Gly216 each bind substrate; that span reads DSGGY. The segment at 247 to 253 is RNA binding; sequence GVGAPED. The active-site Nucleophile is Asp266. The tract at residues 271–275 is RNA binding; important for wobble base 34 recognition; sequence TRVAR. Cys304, Cys306, Cys309, and His335 together coordinate Zn(2+).

The protein belongs to the queuine tRNA-ribosyltransferase family. In terms of assembly, homodimer. Within each dimer, one monomer is responsible for RNA recognition and catalysis, while the other monomer binds to the replacement base PreQ1. Zn(2+) is required as a cofactor.

The catalysed reaction is 7-aminomethyl-7-carbaguanine + guanosine(34) in tRNA = 7-aminomethyl-7-carbaguanosine(34) in tRNA + guanine. It participates in tRNA modification; tRNA-queuosine biosynthesis. Functionally, catalyzes the base-exchange of a guanine (G) residue with the queuine precursor 7-aminomethyl-7-deazaguanine (PreQ1) at position 34 (anticodon wobble position) in tRNAs with GU(N) anticodons (tRNA-Asp, -Asn, -His and -Tyr). Catalysis occurs through a double-displacement mechanism. The nucleophile active site attacks the C1' of nucleotide 34 to detach the guanine base from the RNA, forming a covalent enzyme-RNA intermediate. The proton acceptor active site deprotonates the incoming PreQ1, allowing a nucleophilic attack on the C1' of the ribose to form the product. After dissociation, two additional enzymatic reactions on the tRNA convert PreQ1 to queuine (Q), resulting in the hypermodified nucleoside queuosine (7-(((4,5-cis-dihydroxy-2-cyclopenten-1-yl)amino)methyl)-7-deazaguanosine). The protein is Queuine tRNA-ribosyltransferase of Dehalococcoides mccartyi (strain CBDB1).